Consider the following 480-residue polypeptide: Endothelial transcription factor GATA-2 (480 aa).

Residue serine 73 is modified to Phosphoserine. Asymmetric dimethylarginine is present on arginine 86. The segment at 166 to 208 (SGSHLFGFPPTPPKEVSPDPSTTGAASPASSSAGGSVARGEDK) is disordered. Residues 183-201 (PDPSTTGAASPASSSAGGS) show a composition bias toward low complexity. At serine 192 the chain carries Phosphoserine. 2 GATA-type zinc fingers span residues 295 to 319 (CVNC…CNAC) and 349 to 373 (CANC…CNAC). A Glycyl lysine isopeptide (Lys-Gly) (interchain with G-Cter in SUMO2) cross-link involves residue lysine 389. Positions 457–480 (TPIHPSSSLSFGHPHPSSMVTAMG) are disordered.

As to quaternary structure, interacts with BRD3. Interacts with AR and CCAR1. Interacts with MDFIC.

The protein localises to the nucleus. Its function is as follows. Transcriptional activator which regulates endothelin-1 gene expression in endothelial cells. Binds to the consensus sequence 5'-AGATAG-3'. In Mus musculus (Mouse), this protein is Endothelial transcription factor GATA-2 (Gata2).